A 226-amino-acid chain; its full sequence is ATP synthase subunit a (226 aa).

5 consecutive transmembrane segments (helical) span residues 18-38 (LSLN…TYWL), 74-94 (FVSL…PYIF), 100-120 (LTLT…YGWI), 162-182 (LTAN…TGPM), and 187-207 (IILS…SAVA).

Belongs to the ATPase A chain family. As to quaternary structure, F-type ATPases have 2 components, CF(1) - the catalytic core - and CF(0) - the membrane proton channel. CF(1) has five subunits: alpha(3), beta(3), gamma(1), delta(1), epsilon(1). CF(0) has three main subunits: a, b and c.

The protein resides in the mitochondrion inner membrane. Its function is as follows. Mitochondrial membrane ATP synthase (F(1)F(0) ATP synthase or Complex V) produces ATP from ADP in the presence of a proton gradient across the membrane which is generated by electron transport complexes of the respiratory chain. F-type ATPases consist of two structural domains, F(1) - containing the extramembraneous catalytic core and F(0) - containing the membrane proton channel, linked together by a central stalk and a peripheral stalk. During catalysis, ATP synthesis in the catalytic domain of F(1) is coupled via a rotary mechanism of the central stalk subunits to proton translocation. Key component of the proton channel; it may play a direct role in the translocation of protons across the membrane. The protein is ATP synthase subunit a of Aedes aegypti (Yellowfever mosquito).